A 387-amino-acid chain; its full sequence is Patatin group D-3 (387 aa).

The N-terminal stretch at 1–23 (MATTKSFLILIVMILATTSSTFA) is a signal peptide. The region spanning 32–230 (LSIDGGGIKG…TVADPALLSI (199 aa)) is the PNPLA domain. A GXGXXG motif is present at residues 36 to 41 (GGGIKG). A GXSXG motif is present at residues 75–79 (GTSTG). The active-site Nucleophile is the Ser-77. Residue Asn-115 is glycosylated (N-linked (GlcNAc...) asparagine). Residue Asp-216 is the Proton acceptor of the active site. Positions 216 to 218 (DGA) match the DGA/G motif. Positions 361 to 385 (ETYEEALKRFAKLLSDRKKLRANKA) form a coiled coil.

This sequence belongs to the patatin family. Tuber.

The protein resides in the vacuole. Its function is as follows. Probable lipolytic acyl hydrolase (LAH), an activity which is thought to be involved in the response of tubers to pathogens. The chain is Patatin group D-3 from Solanum tuberosum (Potato).